The primary structure comprises 312 residues: Transcriptional regulator protein Pur-beta (312 aa).

A disordered region spans residues 1–32; that stretch reads MADGDSGSERGGGGGPCGFQPASRGGGEQETQ. At alanine 2 the chain carries N-acetylalanine. Phosphoserine is present on residues serine 6 and serine 8. Residue arginine 24 is modified to Omega-N-methylarginine. Positions 28–254 are DNA-binding; sequence EQETQELASK…LRVSEVKPSY (227 aa). Phosphothreonine is present on threonine 31. Residue serine 101 is modified to Phosphoserine. Arginine 152 carries the omega-N-methylarginine modification. Lysine 267 carries the N6-acetyllysine modification. The span at 284-295 shows a compositional bias: basic and acidic residues; the sequence is ERQRDKLYERRG. The interval 284 to 312 is disordered; sequence ERQRDKLYERRGGGSGGGEESEGEEVDED. The residue at position 294 (arginine 294) is an Omega-N-methylarginine. Phosphoserine occurs at positions 298 and 304. Over residues 302–312 the composition is skewed to acidic residues; the sequence is EESEGEEVDED.

Belongs to the PUR DNA-binding protein family. Homodimer, heterodimer with PURA and heterotrimer with PURA and YBX1/Y-box protein 1. Interacts with MYOCD and SRF. In terms of tissue distribution, expressed in myocardium of heart failure patients.

Its subcellular location is the nucleus. In terms of biological role, transcriptional regulator which can act as an activator or a repressor. Represses the transcription of ACTA2 in fibroblasts and smooth muscle cells via its ability to interact with the purine-rich strand of a MCAT- containing element in the 5' flanking region of the gene. Represses the transcription of MYOCD, capable of repressing all isoforms of MYOCD but the magnitude of the repressive effects is most notable for the SMC- specific isoforms. Promotes hepatic glucose production by activating the transcription of ADCY6, leading to cAMP accumulation, increased PKA activity, CREB activation, and increased transcription of PCK1 and G6PC genes. Has capacity to bind repeated elements in single-stranded DNA such as the purine-rich single strand of the PUR element located upstream of the MYC gene. Participates in transcriptional and translational regulation of alpha-MHC expression in cardiac myocytes by binding to the purine-rich negative regulatory (PNR) element Modulates constitutive liver galectin-3 gene transcription by binding to its promoter. May play a role in the dendritic transport of a subset of mRNAs. The sequence is that of Transcriptional regulator protein Pur-beta (PURB) from Homo sapiens (Human).